The chain runs to 430 residues: Gamma-glutamyl phosphate reductase (430 aa).

The protein belongs to the gamma-glutamyl phosphate reductase family.

Its subcellular location is the cytoplasm. It catalyses the reaction L-glutamate 5-semialdehyde + phosphate + NADP(+) = L-glutamyl 5-phosphate + NADPH + H(+). Its pathway is amino-acid biosynthesis; L-proline biosynthesis; L-glutamate 5-semialdehyde from L-glutamate: step 2/2. In terms of biological role, catalyzes the NADPH-dependent reduction of L-glutamate 5-phosphate into L-glutamate 5-semialdehyde and phosphate. The product spontaneously undergoes cyclization to form 1-pyrroline-5-carboxylate. The polypeptide is Gamma-glutamyl phosphate reductase (Rhodopseudomonas palustris (strain HaA2)).